We begin with the raw amino-acid sequence, 298 residues long: Cyanophycinase (298 aa).

Residues serine 155, glutamate 173, and histidine 197 each act as charge relay system in the active site.

Belongs to the peptidase S51 family.

The enzyme catalyses [L-4-(L-arginin-2-N-yl)aspartate](n) + H2O = [L-4-(L-arginin-2-N-yl)aspartate](n-1) + L-4-(L-arginin-2-N-yl)aspartate. In terms of biological role, exopeptidase that catalyzes the hydrolytic cleavage of multi-L-arginyl-poly-L-aspartic acid (cyanophycin; a water-insoluble reserve polymer) into aspartate-arginine dipeptides. This is Cyanophycinase (cphB) from Trichormus variabilis (strain ATCC 29413 / PCC 7937) (Anabaena variabilis).